The following is a 281-amino-acid chain: Ribosomal RNA small subunit methyltransferase I (281 aa).

The protein belongs to the methyltransferase superfamily. RsmI family.

It is found in the cytoplasm. The enzyme catalyses cytidine(1402) in 16S rRNA + S-adenosyl-L-methionine = 2'-O-methylcytidine(1402) in 16S rRNA + S-adenosyl-L-homocysteine + H(+). Its function is as follows. Catalyzes the 2'-O-methylation of the ribose of cytidine 1402 (C1402) in 16S rRNA. The protein is Ribosomal RNA small subunit methyltransferase I of Pasteurella multocida (strain Pm70).